Consider the following 1309-residue polypeptide: Disease resistance protein RPP2A (1309 aa).

The region spanning 9-173 (RRYDVFPSFS…MVADDVSKKL (165 aa)) is the TIR 1 domain. Glutamate 84 is a catalytic residue. Residues 187-418 (EAHLEAMSSI…FKKTLRNYLP (232 aa)) form the NB-ARC 1 domain. In terms of domain architecture, ALOG spans 488 to 585 (PNRRHSNDDW…KECILVFSCH (98 aa)). Residues 574-737 (REKECILVFS…EVVRNASLRL (164 aa)) form the TIR 2 domain. The 233-residue stretch at 755–987 (SQSTDVEIMG…IFLDLACFFR (233 aa)) folds into the NB-ARC 2 domain. Residues 1114 to 1141 (LPHGLDTLPDELSLLHWENYPLVYLPQK) adopt a coiled-coil conformation. LRR repeat units follow at residues 1145-1167 (VNLVELNMPYSNMEKLWEGKKNL), 1168-1195 (EKLKNIKLSHSRELTDILMLSEALNLEH), 1214-1237 (CGKLVSLNMKDCSRLRSLPSMVDL), 1238-1258 (TTLKLLNLSGCSEFEDIQDFA), 1259-1283 (PNLEEIYLAGTSIRELPLSIRNLTE), and 1285-1307 (VTLDLENCERLQEMPSLPVEIIR).

The protein belongs to the disease resistance TIR-NB-LRR family.

The enzyme catalyses NAD(+) + H2O = ADP-D-ribose + nicotinamide + H(+). In terms of biological role, disease resistance protein that cooperates with RPP2B to confer resistance to Hyaloperonospora parasitica isolate Cala2. The polypeptide is Disease resistance protein RPP2A (Arabidopsis thaliana (Mouse-ear cress)).